Reading from the N-terminus, the 294-residue chain is Large ribosomal subunit protein uL4m (294 aa).

Residues 120-139 (VRGGGRKPWQQKGSGRARHG) are disordered. R147 carries the omega-N-methylarginine modification.

The protein belongs to the universal ribosomal protein uL4 family. Component of the mitochondrial ribosome large subunit (39S) which comprises a 16S rRNA and about 50 distinct proteins. Interacts with MIEF1 upstream open reading frame protein.

It is found in the mitochondrion. The sequence is that of Large ribosomal subunit protein uL4m (MRPL4) from Bos taurus (Bovine).